Here is a 364-residue protein sequence, read N- to C-terminus: Protein-glutamate methylesterase/protein-glutamine glutaminase 3 (364 aa).

Residues 7 to 124 enclose the Response regulatory domain; that stretch reads RVLIVDDSAS…THALLEASAR (118 aa). Aspartate 58 is subject to 4-aspartylphosphate. Residues 167 to 358 form the CheB-type methylesterase domain; the sequence is PTTERLVCIG…REIMLWQDAK (192 aa). Active-site residues include serine 178, histidine 204, and aspartate 300.

It belongs to the CheB family. In terms of processing, phosphorylated by CheA. Phosphorylation of the N-terminal regulatory domain activates the methylesterase activity.

The protein resides in the cytoplasm. The catalysed reaction is [protein]-L-glutamate 5-O-methyl ester + H2O = L-glutamyl-[protein] + methanol + H(+). It catalyses the reaction L-glutaminyl-[protein] + H2O = L-glutamyl-[protein] + NH4(+). Functionally, involved in chemotaxis. Part of a chemotaxis signal transduction system that modulates chemotaxis in response to various stimuli. Catalyzes the demethylation of specific methylglutamate residues introduced into the chemoreceptors (methyl-accepting chemotaxis proteins or MCP) by CheR. Also mediates the irreversible deamidation of specific glutamine residues to glutamic acid. This chain is Protein-glutamate methylesterase/protein-glutamine glutaminase 3, found in Rhodopseudomonas palustris (strain BisB18).